An 884-amino-acid chain; its full sequence is Protein P (884 aa).

A terminal protein domain (TP) region spans residues 1–184 (MHPFSRLFRN…GKPYSWEHRQ (184 aa)). The spacer stretch occupies residues 185-387 (LVQHNGQQHK…YCIHHIVSSL (203 aa)). Residues 299–345 (RNSGHTTWFSSASNSNKSRSREKAYSSNSTSKRYSPPLNYEKSDFSS) form a disordered region. The polymerase/reverse transcriptase domain (RT) stretch occupies residues 388-729 (DDWGPCTVTG…YEELWPVVRQ (342 aa)). The 242-residue stretch at 398-639 (DVTIKSPRTP…NHLHFMGYVI (242 aa)) folds into the Reverse transcriptase domain. Asp470, Asp590, and Asp591 together coordinate Mg(2+).

This sequence belongs to the hepadnaviridae P protein family.

It catalyses the reaction DNA(n) + a 2'-deoxyribonucleoside 5'-triphosphate = DNA(n+1) + diphosphate. It carries out the reaction Endonucleolytic cleavage to 5'-phosphomonoester.. Its activity is regulated as follows. Activated by host HSP70 and HSP40 in vitro to be able to bind the epsilon loop of the pgRNA. Because deletion of the RNase H region renders the protein partly chaperone-independent, the chaperones may be needed indirectly to relieve occlusion of the RNA-binding site by this domain. Inhibited by several reverse-transcriptase inhibitors: Lamivudine, Adefovir and Entecavir. Its function is as follows. Multifunctional enzyme that converts the viral RNA genome into dsDNA in viral cytoplasmic capsids. This enzyme displays a DNA polymerase activity that can copy either DNA or RNA templates, and a ribonuclease H (RNase H) activity that cleaves the RNA strand of RNA-DNA heteroduplexes in a partially processive 3'- to 5'-endonucleasic mode. Neo-synthesized pregenomic RNA (pgRNA) are encapsidated together with the P protein, and reverse-transcribed inside the nucleocapsid. Initiation of reverse-transcription occurs first by binding the epsilon loop on the pgRNA genome, and is initiated by protein priming, thereby the 5'-end of (-)DNA is covalently linked to P protein. Partial (+)DNA is synthesized from the (-)DNA template and generates the relaxed circular DNA (RC-DNA) genome. After budding and infection, the RC-DNA migrates in the nucleus, and is converted into a plasmid-like covalently closed circular DNA (cccDNA). The activity of P protein does not seem to be necessary for cccDNA generation, and is presumably released from (+)DNA by host nuclear DNA repair machinery. The sequence is that of Protein P from Marmota monax (Woodchuck).